The primary structure comprises 312 residues: Pimeloyl-[acyl-carrier protein] methyl ester esterase (312 aa).

Positions 17–241 (VYLIHGWGAN…KAAHAPFLSH (225 aa)) constitute an AB hydrolase-1 domain. Residues Trp-23, 83–84 (SL), and 145–149 (FLQLQ) contribute to the substrate site. Ser-83 serves as the catalytic Nucleophile. Catalysis depends on residues Asp-207 and His-235. A substrate-binding site is contributed by His-235.

Belongs to the AB hydrolase superfamily. Carboxylesterase BioH family. As to quaternary structure, monomer.

It localises to the cytoplasm. The enzyme catalyses 6-carboxyhexanoyl-[ACP] methyl ester + H2O = 6-carboxyhexanoyl-[ACP] + methanol + H(+). The protein operates within cofactor biosynthesis; biotin biosynthesis. The physiological role of BioH is to remove the methyl group introduced by BioC when the pimeloyl moiety is complete. It allows to synthesize pimeloyl-ACP via the fatty acid synthetic pathway through the hydrolysis of the ester bonds of pimeloyl-ACP esters. In Neisseria meningitidis serogroup A / serotype 4A (strain DSM 15465 / Z2491), this protein is Pimeloyl-[acyl-carrier protein] methyl ester esterase.